The chain runs to 468 residues: Putative ankyrin repeat protein R873 (468 aa).

ANK repeat units follow at residues 38-68 (IKTD…KHNL), 78-107 (SLNE…DIEG), 109-137 (DNCA…NFRA), 138-167 (NNDK…DIRS), 169-197 (NDCS…NIRT), 198-227 (NDDW…DIRS), 229-257 (DDHA…NIIA), 258-287 (EDNY…NITS), 289-316 (YYTI…NIRD), 317-346 (CDSS…DFRE), 348-376 (DDLT…DFRV), 378-406 (DDYP…DVRA), 407-436 (EDDY…NIRA), and 438-466 (NDYA…VLNK).

This Acanthamoeba polyphaga mimivirus (APMV) protein is Putative ankyrin repeat protein R873.